A 112-amino-acid chain; its full sequence is MKKIEAIIKPFKLDEVKEALHEIGLQGITVTEAKGFGRQKGHTELYRGAEYVVDFLPKVKIELVIEDALVERAIEAIQQAAQTGRIGDGKIFVYAIEEAIRIRTGERGGDAI.

The residue at position 51 (Tyr-51) is an O-UMP-tyrosine.

Belongs to the P(II) protein family. In terms of assembly, homotrimer.

Its function is as follows. P-II indirectly controls the transcription of the glutamine synthetase gene (glnA). P-II prevents NR-II-catalyzed conversion of NR-I to NR-I-phosphate, the transcriptional activator of glnA. When P-II is uridylylated to P-II-UMP, these events are reversed. When the ratio of Gln to 2-ketoglutarate decreases, P-II is uridylylated to P-II-UMP, which causes the deadenylation of glutamine synthetase, so activating the enzyme. In Rhodospirillum rubrum (strain ATCC 11170 / ATH 1.1.1 / DSM 467 / LMG 4362 / NCIMB 8255 / S1), this protein is Nitrogen regulatory protein P-II (glnB).